Reading from the N-terminus, the 245-residue chain is 1-(5-phosphoribosyl)-5-[(5-phosphoribosylamino)methylideneamino] imidazole-4-carboxamide isomerase (245 aa).

The active-site Proton acceptor is Asp8. Asp130 serves as the catalytic Proton donor.

The protein belongs to the HisA/HisF family.

The protein localises to the cytoplasm. The enzyme catalyses 1-(5-phospho-beta-D-ribosyl)-5-[(5-phospho-beta-D-ribosylamino)methylideneamino]imidazole-4-carboxamide = 5-[(5-phospho-1-deoxy-D-ribulos-1-ylimino)methylamino]-1-(5-phospho-beta-D-ribosyl)imidazole-4-carboxamide. Its pathway is amino-acid biosynthesis; L-histidine biosynthesis; L-histidine from 5-phospho-alpha-D-ribose 1-diphosphate: step 4/9. The protein is 1-(5-phosphoribosyl)-5-[(5-phosphoribosylamino)methylideneamino] imidazole-4-carboxamide isomerase of Azotobacter vinelandii (strain DJ / ATCC BAA-1303).